Here is a 207-residue protein sequence, read N- to C-terminus: Outer-membrane lipoprotein LolB (207 aa).

An N-terminal signal peptide occupies residues 1–21 (MPMRKRHFYRLLPLASLLLAA). Cysteine 22 is lipidated: N-palmitoyl cysteine. Residue cysteine 22 is the site of S-diacylglycerol cysteine attachment.

Belongs to the LolB family. As to quaternary structure, monomer.

The protein resides in the cell outer membrane. Its function is as follows. Plays a critical role in the incorporation of lipoproteins in the outer membrane after they are released by the LolA protein. The protein is Outer-membrane lipoprotein LolB of Yersinia pseudotuberculosis serotype O:3 (strain YPIII).